The chain runs to 266 residues: U2 small nuclear ribonucleoprotein A' (266 aa).

LRR repeat units lie at residues 30 to 51 (ILRN…NHLA), 53 to 74 (PTHI…HHRD), 75 to 95 (DIET…ALLP), and 97 to 118 (KLKS…IPLS). Positions 132 to 170 (NPICHLSEYRQRILALVPSLEVLDFKLVSQAEKAQAVKD) constitute an LRRCT domain.

The protein belongs to the U2 small nuclear ribonucleoprotein A family. In terms of assembly, associated with the spliceosome.

Its subcellular location is the nucleus. Functionally, involved in pre-mRNA splicing. This chain is U2 small nuclear ribonucleoprotein A' (LEA1), found in Candida glabrata (strain ATCC 2001 / BCRC 20586 / JCM 3761 / NBRC 0622 / NRRL Y-65 / CBS 138) (Yeast).